The primary structure comprises 470 residues: Tert-butanol monooxygenase / tert-amyl alcohol desaturase oxygenase subunit (470 aa).

In terms of domain architecture, Rieske spans 51–155 (WQPVCLSQEL…AFERNGLVFA (105 aa)). [2Fe-2S] cluster-binding residues include Cys91, His93, Cys110, and His113.

It belongs to the bacterial ring-hydroxylating dioxygenase alpha subunit family. This two-component enzyme is composed of an oxygenase (MdpJ) and a reductase (MdpK). [2Fe-2S] cluster serves as cofactor.

It catalyses the reaction tert-butanol + NADPH + O2 + H(+) = 2-methylpropane-1,2-diol + NADP(+) + H2O. The enzyme catalyses 2-methylbutan-2-ol + NADPH + O2 + H(+) = 3-hydroxy-3-methylbut-1-ene + NADP(+) + 2 H2O. In terms of biological role, oxygenase component of a two-component system involved in the degradation of tertiary alcohols such as tert-butyl alcohol (TBA) and tert-amyl alcohol (TAA). In the presence of TBA, catalyzes the hydroxylation of TBA to 2-methylpropane-1,2-diol. In the presence of TAA, functions as a desaturase, enabling the degradation of TAA and resulting in the formation of the hemiterpene 3-hydroxy-3-methylbut-1-ene. The specificity of the catalysis depends strongly on the molecule structure of the substrate, allowing either hydroxylation or desaturation reactions. Also catalyzes the desaturation of the tertiary alcohol 3-methyl-3-pentanol (a C6 homolog of TBA and TAA) to 3-methyl-1-penten-3-ol, with lower efficiency. In addition, can transform some secondary alcohols, including the hydroxylation of 2-propanol to 1,2-propanediol, and the desaturation of 2-butanol, 3-methyl-2-butanol and 3-pentanol. The protein is Tert-butanol monooxygenase / tert-amyl alcohol desaturase oxygenase subunit of Aquincola tertiaricarbonis.